We begin with the raw amino-acid sequence, 211 residues long: PITH domain-containing protein CG6153 (211 aa).

The 173-residue stretch at 20-192 (DHALEMGIEY…GVTICNYESR (173 aa)) folds into the PITH domain.

This sequence belongs to the PITHD1 family.

This chain is PITH domain-containing protein CG6153, found in Drosophila melanogaster (Fruit fly).